The chain runs to 217 residues: Probable glutathione S-transferase (217 aa).

The 80-residue stretch at 2-81 (AEVKLLGLRY…YIDEAFEGPS (80 aa)) folds into the GST N-terminal domain. Residues Ser12, Lys39, Ile53, and 65-66 (ES) each bind glutathione. The region spanning 86–210 (DPYDRALARF…ELLIRYRAYI (125 aa)) is the GST C-terminal domain.

This sequence belongs to the GST superfamily. HSP26 family.

It carries out the reaction RX + glutathione = an S-substituted glutathione + a halide anion + H(+). The chain is Probable glutathione S-transferase (PRP1) from Solanum tuberosum (Potato).